The sequence spans 717 residues: RNA helicase NPH-II (717 aa).

The 192-residue stretch at 193–384 (FEIFISKKNC…IYFKNIVEIY (192 aa)) folds into the Helicase ATP-binding domain. An ATP-binding site is contributed by 206-213 (GGTGIGKT). Residues 331 to 334 (DEIH) carry the DEXH box motif. The region spanning 406–566 (ILKNYMPSVG…VFKYNNMDYY (161 aa)) is the Helicase C-terminal domain.

It belongs to the DEAD box helicase family. DEAH subfamily. Monomer.

Its subcellular location is the virion. The catalysed reaction is ATP + H2O = ADP + phosphate + H(+). Functionally, NTP-dependent helicase that catalyzes unidirectional unwinding of 3'tailed duplex RNAs and plays an important role during transcription of early mRNAs, presumably by preventing R-loop formation behind the elongating RNA polymerase. Might also play a role in the export of newly synthesized mRNA chains out of the core into the cytoplasm. Required for replication and propagation of viral particles. The protein is RNA helicase NPH-II (NPH2) of Melanoplus sanguinipes (Migratory grasshopper).